Reading from the N-terminus, the 477-residue chain is Tripartite motif-containing protein 72 (477 aa).

L14, Q17, P29, C31, T34, Q37, T53, P56, G86, L89, V97, E100, L105, G108, G114, and K117 together coordinate Zn(2+). An RING-type zinc finger spans residues 16–59 (CQLCLELFRAPVTPECGHTFCQGCLTGVPKNQDQNGSTPCPTCQ). Residues 83–124 (VPQGHCLEHMDPLSVYCEQDKELICGVCASLGKHKGHNIITA) form a B box-type zinc finger. The stretch at 135-232 (LPQQQVILQE…QMEGVLKDVE (98 aa)) forms a coiled coil. The B30.2/SPRY domain occupies 272 to 476 (DEFKFQVWRK…LKIFYPPAEQ (205 aa)).

It belongs to the TRIM/RBCC family. Homodimer. Homooligomer; disulfide-linked. Oligomerizes on the phospholipid membrane. Post-translationally, disulfide bond formation at Cys-244 occurs in case of membrane damage that cause the entry of the oxidized milieu of the extracellular space, resulting in homooligomerization.

Its subcellular location is the cell membrane. It localises to the sarcolemma. It is found in the cytoplasmic vesicle membrane. It carries out the reaction S-ubiquitinyl-[E2 ubiquitin-conjugating enzyme]-L-cysteine + [acceptor protein]-L-lysine = [E2 ubiquitin-conjugating enzyme]-L-cysteine + N(6)-ubiquitinyl-[acceptor protein]-L-lysine.. It participates in protein modification; protein ubiquitination. With respect to regulation, specifically binds phosphatidylserine. The binding to phospholipids enhances ubiquitination activity. Functionally, muscle-specific E3 ubiquitin-protein ligase that plays a central role in cell membrane repair by nucleating the assembly of the repair machinery at injury sites. Acts as a sensor of oxidation: upon membrane damage, entry of extracellular oxidative environment results in disulfide bond formation and homooligomerization at the injury site. This oligomerization acts as a nucleation site for recruitment of TRIM72-containing vesicles to the injury site, leading to membrane patch formation. Probably acts upstream of the Ca(2+)-dependent membrane resealing process. Required for transport of DYSF to sites of cell injury during repair patch formation. Regulates membrane budding and exocytosis. May be involved in the regulation of the mobility of KCNB1-containing endocytic vesicles. This chain is Tripartite motif-containing protein 72 (trim72), found in Xenopus laevis (African clawed frog).